The following is a 432-amino-acid chain: Luc7-like protein 3 (432 aa).

Met-1 carries the post-translational modification N-acetylmethionine. Ser-3, Ser-110, and Ser-115 each carry phosphoserine. The stretch at 124 to 181 (KNEEKIQVLTDKIDVLLQQIEELGSEGKVEEAQGMMKLVEQLKEERELLRSTTSTIES) forms a coiled coil. At Lys-231 the chain carries N6-acetyllysine. Over residues 234–287 (LRKRTEEPDRDERLKKEKQEREEREKEREREREERERKRRREEEEREKERARDR) the composition is skewed to basic and acidic residues. The segment at 234–432 (LRKRTEEPDR…IKSEGDTQSN (199 aa)) is disordered. A compositionally biased stretch (basic residues) spans 288–301 (ERRKRSRSRSRHSS). A compositionally biased stretch (basic and acidic residues) spans 302–311 (RTSDRRCSRS). Basic residues predominate over residues 312–367 (RDHKRSRSRDRRRSRSRDRRRSRSHDRSERKHRSRSRDRRRSKSRDRKSYKHRSKS). The span at 368–414 (RDREQDRKSKEKEKKGSDDKKSSVKSSSREKQSEDTNPESKESDTKN) shows a compositional bias: basic and acidic residues. Residue Ser-420 is modified to Phosphoserine. The span at 421-432 (EDIKSEGDTQSN) shows a compositional bias: basic and acidic residues. Lys-424 participates in a covalent cross-link: Glycyl lysine isopeptide (Lys-Gly) (interchain with G-Cter in SUMO1); alternate. A Glycyl lysine isopeptide (Lys-Gly) (interchain with G-Cter in SUMO2); alternate cross-link involves residue Lys-424. 2 positions are modified to phosphoserine: Ser-425 and Ser-431.

Belongs to the Luc7 family. As to quaternary structure, may interact with SFRS1 and form homodimers. Interacts with JMJD6. Interacts with RBM25. Interacts with RSRC1 (via Arg/Ser-rich domain). Interacts with RRP1B.

It is found in the nucleus speckle. Functionally, binds cAMP regulatory element DNA sequence. May play a role in RNA splicing. This Mus musculus (Mouse) protein is Luc7-like protein 3 (Luc7l3).